We begin with the raw amino-acid sequence, 83 residues long: Mu-theraphotoxin-Hhn2i (83 aa).

The first 21 residues, 1–21 (MKASMFLALAGLVLLFVVGYA), serve as a signal peptide directing secretion. Residues 22-48 (SESEEKEFPRELLSKIFAVDDFKGEER) constitute a propeptide that is removed on maturation. 3 disulfides stabilise this stretch: Cys-50-Cys-65, Cys-57-Cys-70, and Cys-64-Cys-77. Leu-81 is modified (leucine amide).

The protein belongs to the neurotoxin 10 (Hwtx-1) family. 15 (Hntx-3) subfamily. Monomer. In terms of tissue distribution, expressed by the venom gland.

It is found in the secreted. Its function is as follows. Lethal neurotoxin. Selectively blocks tetrodotoxin-sensitive voltage-gated sodium channels (Nav). Does not affect tetrodotoxin-resistant voltage-gated sodium channels or calcium channels. The protein is Mu-theraphotoxin-Hhn2i of Cyriopagopus hainanus (Chinese bird spider).